Reading from the N-terminus, the 1379-residue chain is DNA-directed RNA polymerase subunit beta'' (1379 aa).

Residues cysteine 220, cysteine 293, cysteine 300, and cysteine 303 each coordinate Zn(2+).

The protein belongs to the RNA polymerase beta' chain family. RpoC2 subfamily. In plastids the minimal PEP RNA polymerase catalytic core is composed of four subunits: alpha, beta, beta', and beta''. When a (nuclear-encoded) sigma factor is associated with the core the holoenzyme is formed, which can initiate transcription. It depends on Zn(2+) as a cofactor.

The protein resides in the plastid. Its subcellular location is the chloroplast. It carries out the reaction RNA(n) + a ribonucleoside 5'-triphosphate = RNA(n+1) + diphosphate. Its function is as follows. DNA-dependent RNA polymerase catalyzes the transcription of DNA into RNA using the four ribonucleoside triphosphates as substrates. The polypeptide is DNA-directed RNA polymerase subunit beta'' (Capsella bursa-pastoris (Shepherd's purse)).